We begin with the raw amino-acid sequence, 407 residues long: Bifunctional enzyme IspD/IspF (407 aa).

A 2-C-methyl-D-erythritol 4-phosphate cytidylyltransferase region spans residues 1 to 246; that stretch reads MQPLAEATTI…RQDHVSFPDI (246 aa). The interval 247–407 is 2-C-methyl-D-erythritol 2,4-cyclodiphosphate synthase; sequence RTGNGYDVHS…TVIYPGEVPE (161 aa). A divalent metal cation contacts are provided by Asp253 and His255. Residues 253-255 and 279-280 contribute to the 4-CDP-2-C-methyl-D-erythritol 2-phosphate site; these read DVH and HS. His287 is an a divalent metal cation binding site. 4-CDP-2-C-methyl-D-erythritol 2-phosphate is bound by residues 301-303, 377-380, Phe384, and Arg387; these read DIG and TTNE.

In the N-terminal section; belongs to the IspD/TarI cytidylyltransferase family. IspD subfamily. The protein in the C-terminal section; belongs to the IspF family. A divalent metal cation is required as a cofactor.

The catalysed reaction is 2-C-methyl-D-erythritol 4-phosphate + CTP + H(+) = 4-CDP-2-C-methyl-D-erythritol + diphosphate. It catalyses the reaction 4-CDP-2-C-methyl-D-erythritol 2-phosphate = 2-C-methyl-D-erythritol 2,4-cyclic diphosphate + CMP. It functions in the pathway isoprenoid biosynthesis; isopentenyl diphosphate biosynthesis via DXP pathway; isopentenyl diphosphate from 1-deoxy-D-xylulose 5-phosphate: step 2/6. The protein operates within isoprenoid biosynthesis; isopentenyl diphosphate biosynthesis via DXP pathway; isopentenyl diphosphate from 1-deoxy-D-xylulose 5-phosphate: step 4/6. Bifunctional enzyme that catalyzes the formation of 4-diphosphocytidyl-2-C-methyl-D-erythritol from CTP and 2-C-methyl-D-erythritol 4-phosphate (MEP) (IspD), and catalyzes the conversion of 4-diphosphocytidyl-2-C-methyl-D-erythritol 2-phosphate (CDP-ME2P) to 2-C-methyl-D-erythritol 2,4-cyclodiphosphate (ME-CPP) with a corresponding release of cytidine 5-monophosphate (CMP) (IspF). The sequence is that of Bifunctional enzyme IspD/IspF from Brucella anthropi (strain ATCC 49188 / DSM 6882 / CCUG 24695 / JCM 21032 / LMG 3331 / NBRC 15819 / NCTC 12168 / Alc 37) (Ochrobactrum anthropi).